Reading from the N-terminus, the 328-residue chain is tRNA(Ile)-lysidine synthase (328 aa).

35-40 contributes to the ATP binding site; sequence SGGADS.

This sequence belongs to the tRNA(Ile)-lysidine synthase family.

Its subcellular location is the cytoplasm. It catalyses the reaction cytidine(34) in tRNA(Ile2) + L-lysine + ATP = lysidine(34) in tRNA(Ile2) + AMP + diphosphate + H(+). In terms of biological role, ligates lysine onto the cytidine present at position 34 of the AUA codon-specific tRNA(Ile) that contains the anticodon CAU, in an ATP-dependent manner. Cytidine is converted to lysidine, thus changing the amino acid specificity of the tRNA from methionine to isoleucine. In Polaromonas naphthalenivorans (strain CJ2), this protein is tRNA(Ile)-lysidine synthase.